Consider the following 41-residue polypeptide: Photosystem II reaction center protein L (41 aa).

The chain crosses the membrane as a helical span at residues 20-40; sequence LFLGLLLVFVLGILSPATSLT.

This sequence belongs to the PsbL family. In terms of assembly, PSII is composed of 1 copy each of membrane proteins PsbA, PsbB, PsbC, PsbD, PsbE, PsbF, PsbH, PsbI, PsbJ, PsbK, PsbL, PsbM, PsbT, PsbX, PsbY, PsbZ, Psb30/Ycf12, peripheral proteins PsbO, CyanoQ (PsbQ), PsbU, PsbV and a large number of cofactors. It forms dimeric complexes.

The protein localises to the cellular thylakoid membrane. Its function is as follows. One of the components of the core complex of photosystem II (PSII). PSII is a light-driven water:plastoquinone oxidoreductase that uses light energy to abstract electrons from H(2)O, generating O(2) and a proton gradient subsequently used for ATP formation. It consists of a core antenna complex that captures photons, and an electron transfer chain that converts photonic excitation into a charge separation. This subunit is found at the monomer-monomer interface and is required for correct PSII assembly and/or dimerization. This chain is Photosystem II reaction center protein L, found in Synechococcus sp. (strain ATCC 27144 / PCC 6301 / SAUG 1402/1) (Anacystis nidulans).